A 346-amino-acid chain; its full sequence is fMet-Leu-Phe receptor (346 aa).

N-linked (GlcNAc...) asparagine glycans are attached at residues asparagine 1 and asparagine 7. The Extracellular segment spans residues 1–24 (NSSLPTNISGGTPAVSAGYLFLDI). The helical transmembrane segment at 25–47 (ITYLVFAVTFVLGVLGNGLVIWV) threads the bilayer. Residues 48-58 (AGFRMTHTVTT) lie on the Cytoplasmic side of the membrane. The chain crosses the membrane as a helical span at residues 59–80 (ISYLNLAVADFCFTSTLPFFMV). Over 81 to 97 (RKAMGGHWPFGWFLCKF) the chain is Extracellular. A disulfide bridge links cysteine 95 with cysteine 173. A helical membrane pass occupies residues 98 to 118 (IFTIVDINLFGSVFLIALIAL). At 119–137 (DRCVCVLHPVWTQNHRTVS) the chain is on the cytoplasmic side. Residues 138 to 159 (LAKKVIIGPWVMALLLTLPVII) traverse the membrane as a helical segment. Residues 160–202 (RVTTVPGKTGTVACTFNFSPWTNDPKERINVAIAMLTVRGIIR) are Extracellular-facing. Residues 203–223 (FIIGFSAPMSIVAVSYGLIAT) form a helical membrane-spanning segment. Residues 224-239 (KIHKQGLIKFSRPLRV) lie on the Cytoplasmic side of the membrane. A helical membrane pass occupies residues 240–263 (LSFVAAAFFLCWSPYQVVALIATV). Over 264 to 282 (RIRELLQGMYKEIGIAVDV) the chain is Extracellular. Residues 283–302 (TSALAFFNSCLNPMLYVFMG) traverse the membrane as a helical segment. The Cytoplasmic portion of the chain corresponds to 303 to 346 (QDFRERLIHALPASLERALTEDSTQTSDTATNSTLPSAEVALQA). The segment at 322–346 (TEDSTQTSDTATNSTLPSAEVALQA) is disordered. A compositionally biased stretch (polar residues) spans 323-338 (EDSTQTSDTATNSTLP).

It belongs to the G-protein coupled receptor 1 family. In terms of processing, phosphorylated; which is necessary for desensitization.

The protein resides in the cell membrane. High affinity receptor for N-formyl-methionyl peptides (fMLP), which are powerful neutrophil chemotactic factors. Binding of fMLP to the receptor stimulates intracellular calcium mobilization and superoxide anion release. This response is mediated via a G-protein that activates a phosphatidylinositol-calcium second messenger system. Receptor for TAFA4, mediates its effects on chemoattracting macrophages, promoting phagocytosis and increasing ROS release. Receptor for cathepsin CTSG, leading to increased phagocyte chemotaxis. This chain is fMet-Leu-Phe receptor (FPR1), found in Pan troglodytes (Chimpanzee).